A 151-amino-acid chain; its full sequence is MRVSGRPMLLALLLLLSTVGDPGHAQPRGPADRQTLLRLLVELVQELKKFHIGDSKRLQLLGESDFALGRREATDYGADQEEQRVEIVPRDLRMKDKFLKHLTGPLYFSPKCSKHFHRLYHNTRDCTIPAYYKRCARLLTRLAVSPMCMER.

A signal peptide spans methionine 1 to alanine 25. 2 disulfide bridges follow: cysteine 112-cysteine 148 and cysteine 126-cysteine 135.

Belongs to the ALKAL family. Homodimer.

The protein localises to the secreted. It localises to the cell membrane. Its function is as follows. Cytokine that acts as a physiological ligand for receptor tyrosine kinases LTK and ALK, leading to their activation. Cytokine-binding is sufficient to activate LTK. In contrast, ALKAL2-driven activation of ALK is coupled with heparin-binding to ALK. Stimulation of ALK signaling is involved in neural development and regulation of energy expenditure. In Rattus norvegicus (Rat), this protein is ALK and LTK ligand 2.